We begin with the raw amino-acid sequence, 359 residues long: Prostaglandin F2-alpha receptor (359 aa).

Topologically, residues 1–31 (MSMNNSKQLVSPAAALLSNTTCQTENRLSVF) are extracellular. N-linked (GlcNAc...) asparagine glycans are attached at residues asparagine 4 and asparagine 19. A helical membrane pass occupies residues 32-54 (FSVIFMTVGILSNSLAIAILMKA). At 55–69 (YQRFRQKSKASFLLL) the chain is on the cytoplasmic side. Residues 70-90 (ASGLVITDFFGHLINGAIAVF) traverse the membrane as a helical segment. At 91-109 (VYASDKEWIRFDQSNVLCS) the chain is on the extracellular side. An intrachain disulfide couples cysteine 108 to cysteine 186. Residues 110–131 (IFGICMVFSGLCPLLLGSVMAI) traverse the membrane as a helical segment. Topologically, residues 132–152 (ERCIGVTKPIFHSTKITSKHV) are cytoplasmic. The chain crosses the membrane as a helical span at residues 153 to 175 (KMMLSGVCLFAVFIALLPILGHR). The Extracellular portion of the chain corresponds to 176–198 (DYKIQASRTWCFYNTEDIKDWED). The helical transmembrane segment at 199–224 (RFYLLLFSFLGLLALGVSLLCNAITG) threads the bilayer. The Cytoplasmic portion of the chain corresponds to 225–250 (ITLLRVKFKSQQHRQGRSHHLEMVIQ). A helical membrane pass occupies residues 251–267 (LLAIMCVSCICWSPFLV). The Extracellular segment spans residues 268–285 (TMANIGINGNHSLETCET). Residues 286–307 (TLFALRMATWNQILDPWVYILL) form a helical membrane-spanning segment. Over 308–359 (RKAVLKNLYKLASQCCGVHVISLHIWELSSIKNSLKVAAISESPVAEKSAST) the chain is Cytoplasmic.

This sequence belongs to the G-protein coupled receptor 1 family. In terms of assembly, isoform 1 can form heterodimers with isoform 5 (and probably other isoforms). In terms of tissue distribution, eye.

It is found in the cell membrane. In terms of biological role, receptor for prostaglandin F2-alpha (PGF2-alpha). The activity of this receptor is mediated by G proteins which activate a phosphatidylinositol-calcium second messenger system. Initiates luteolysis in the corpus luteum. Isoforms 2 to 7 do not bind PGF2-alpha but are proposed to modulate signaling by participating in variant receptor complexes; heterodimers between isoform 1 and isoform 5 are proposed to be a receptor for prostamides including the synthetic analog bimatoprost. This is Prostaglandin F2-alpha receptor (PTGFR) from Homo sapiens (Human).